The chain runs to 308 residues: Ribosomal RNA large subunit methyltransferase F (308 aa).

Residues 190–212 (DSAASARAGSERKRRNLGQDKND) form a disordered region.

The protein belongs to the methyltransferase superfamily. METTL16/RlmF family.

The protein localises to the cytoplasm. The enzyme catalyses adenosine(1618) in 23S rRNA + S-adenosyl-L-methionine = N(6)-methyladenosine(1618) in 23S rRNA + S-adenosyl-L-homocysteine + H(+). Specifically methylates the adenine in position 1618 of 23S rRNA. The sequence is that of Ribosomal RNA large subunit methyltransferase F from Citrobacter koseri (strain ATCC BAA-895 / CDC 4225-83 / SGSC4696).